The sequence spans 58 residues: UPF0339 protein Msl4696 (58 aa).

This sequence belongs to the UPF0339 family.

This Mesorhizobium japonicum (strain LMG 29417 / CECT 9101 / MAFF 303099) (Mesorhizobium loti (strain MAFF 303099)) protein is UPF0339 protein Msl4696.